The sequence spans 162 residues: Ribosomal RNA large subunit methyltransferase H (162 aa).

Glycine 108 is a binding site for S-adenosyl-L-methionine.

It belongs to the RNA methyltransferase RlmH family. As to quaternary structure, homodimer.

It is found in the cytoplasm. It catalyses the reaction pseudouridine(1915) in 23S rRNA + S-adenosyl-L-methionine = N(3)-methylpseudouridine(1915) in 23S rRNA + S-adenosyl-L-homocysteine + H(+). Functionally, specifically methylates the pseudouridine at position 1915 (m3Psi1915) in 23S rRNA. The chain is Ribosomal RNA large subunit methyltransferase H from Methylobacterium nodulans (strain LMG 21967 / CNCM I-2342 / ORS 2060).